A 382-amino-acid polypeptide reads, in one-letter code: Galactokinase (382 aa).

34–37 is a binding site for substrate; the sequence is EHTD. ATP is bound at residue 124–130; the sequence is GAGLSSS. Mg(2+) is bound by residues S130 and E162. The Proton acceptor role is filled by D174. Substrate is bound at residue Y223.

The protein belongs to the GHMP kinase family. GalK subfamily.

It is found in the cytoplasm. The catalysed reaction is alpha-D-galactose + ATP = alpha-D-galactose 1-phosphate + ADP + H(+). It functions in the pathway carbohydrate metabolism; galactose metabolism. Its function is as follows. Catalyzes the transfer of the gamma-phosphate of ATP to D-galactose to form alpha-D-galactose-1-phosphate (Gal-1-P). The polypeptide is Galactokinase (Aeromonas hydrophila subsp. hydrophila (strain ATCC 7966 / DSM 30187 / BCRC 13018 / CCUG 14551 / JCM 1027 / KCTC 2358 / NCIMB 9240 / NCTC 8049)).